The chain runs to 427 residues: Phosphomethylpyrimidine synthase (427 aa).

Residues N66, M95, Y124, H163, S185–G187, D226–R229, and E265 contribute to the substrate site. Residue H269 coordinates Zn(2+). Y292 lines the substrate pocket. A Zn(2+)-binding site is contributed by H333. [4Fe-4S] cluster contacts are provided by C409, C412, and C416.

This sequence belongs to the ThiC family. In terms of assembly, homodimer. [4Fe-4S] cluster is required as a cofactor.

It carries out the reaction 5-amino-1-(5-phospho-beta-D-ribosyl)imidazole + S-adenosyl-L-methionine = 4-amino-2-methyl-5-(phosphooxymethyl)pyrimidine + CO + 5'-deoxyadenosine + formate + L-methionine + 3 H(+). The protein operates within cofactor biosynthesis; thiamine diphosphate biosynthesis. Functionally, catalyzes the synthesis of the hydroxymethylpyrimidine phosphate (HMP-P) moiety of thiamine from aminoimidazole ribotide (AIR) in a radical S-adenosyl-L-methionine (SAM)-dependent reaction. The sequence is that of Phosphomethylpyrimidine synthase from Syntrophus aciditrophicus (strain SB).